We begin with the raw amino-acid sequence, 601 residues long: Probable protein arginine N-methyltransferase 3 (601 aa).

A compositionally biased stretch (basic and acidic residues) spans 1 to 10 (MAATMVKHEI). The tract at residues 1–50 (MAATMVKHEILNYSEDEEENYSDEGDWGDWKADDNGIEGGEEEEEDDGDD) is disordered. Composition is skewed to acidic residues over residues 14–27 (SEDE…EGDW) and 35–50 (NGIE…DGDD). Residues 57-78 (CLFCDSHFVSCDLLFEHCRLSH) form a C2H2-type zinc finger. The SAM-dependent MTase PRMT-type domain occupies 242 to 554 (NENYFGSYSS…NDRREAIGTE (313 aa)). 6 residues coordinate S-adenosyl-L-homocysteine: R264, G288, E310, S312, V345, and E346. Catalysis depends on residues E365 and E374.

This sequence belongs to the class I-like SAM-binding methyltransferase superfamily. Protein arginine N-methyltransferase family.

It is found in the cytoplasm. The protein resides in the cytosol. It catalyses the reaction L-arginyl-[protein] + S-adenosyl-L-methionine = N(omega)-methyl-L-arginyl-[protein] + S-adenosyl-L-homocysteine + H(+). The catalysed reaction is L-arginyl-[protein] + 2 S-adenosyl-L-methionine = N(omega),N(omega)-dimethyl-L-arginyl-[protein] + 2 S-adenosyl-L-homocysteine + 2 H(+). Protein-arginine N-methyltransferase that catalyzes both the monomethylation and asymmetric dimethylation of the guanidino nitrogens of arginine residues in target proteins, and therefore falls into the group of type I methyltransferases. The protein is Probable protein arginine N-methyltransferase 3 (PRMT3) of Arabidopsis thaliana (Mouse-ear cress).